A 266-amino-acid chain; its full sequence is Phosphatidylglycerol--prolipoprotein diacylglyceryl transferase (266 aa).

The next 7 membrane-spanning stretches (helical) occupy residues 19–39 (IWGP…FAFA), 61–81 (LMFW…TLFY), 91–111 (LYLF…LGVI), 125–145 (FLQV…FGRI), 176–196 (PSQL…ILWF), 204–224 (GAVS…VEFF), and 237–257 (GMSM…ILMV). Arg144 serves as a coordination point for a 1,2-diacyl-sn-glycero-3-phospho-(1'-sn-glycerol).

This sequence belongs to the Lgt family.

The protein resides in the cell inner membrane. It catalyses the reaction L-cysteinyl-[prolipoprotein] + a 1,2-diacyl-sn-glycero-3-phospho-(1'-sn-glycerol) = an S-1,2-diacyl-sn-glyceryl-L-cysteinyl-[prolipoprotein] + sn-glycerol 1-phosphate + H(+). It functions in the pathway protein modification; lipoprotein biosynthesis (diacylglyceryl transfer). Its function is as follows. Catalyzes the transfer of the diacylglyceryl group from phosphatidylglycerol to the sulfhydryl group of the N-terminal cysteine of a prolipoprotein, the first step in the formation of mature lipoproteins. This is Phosphatidylglycerol--prolipoprotein diacylglyceryl transferase from Idiomarina loihiensis (strain ATCC BAA-735 / DSM 15497 / L2-TR).